We begin with the raw amino-acid sequence, 305 residues long: Oxidoreductase OpS7 (305 aa).

This sequence belongs to the oxidoreductase OpS7 family.

The protein operates within secondary metabolite biosynthesis. In terms of biological role, oxidoreductase; part of the gene cluster that mediates the biosynthesis of the bibenzoquinone oosporein, a metabolite required for fungal virulence that acts by evading host immunity to facilitate fungal multiplication in insects. The non-reducing polyketide synthase OpS1 produces orsellinic acid by condensing acetyl-CoA with 3 malonyl-CoA units. Orsellinic acid is then hydroxylated to benzenetriol by the hydroxylase OpS4. The intermediate is oxidized either nonenzymatically to 5,5'-dideoxy-oosporein or enzymatically to benzenetetrol by the oxidoreductase OpS7. The latter is further dimerized to oosporein by the catalase OpS5. OpS6 probably functions en route for protecting cells against oxidative stress by scavenging any leaked free radical form of benzenetetrol by activating the thiol group of glutathione. The polypeptide is Oxidoreductase OpS7 (Beauveria bassiana (strain ARSEF 2860) (White muscardine disease fungus)).